A 331-amino-acid polypeptide reads, in one-letter code: Pyruvate dehydrogenase E1 component subunit beta (331 aa).

A thiamine diphosphate-binding site is contributed by E60. The K(+) site is built by L113, A161, I162, D164, and N166.

As to quaternary structure, heterodimer of an alpha and a beta chain. The cofactor is thiamine diphosphate.

Its subcellular location is the plastid. It is found in the chloroplast. The catalysed reaction is N(6)-[(R)-lipoyl]-L-lysyl-[protein] + pyruvate + H(+) = N(6)-[(R)-S(8)-acetyldihydrolipoyl]-L-lysyl-[protein] + CO2. The pyruvate dehydrogenase complex catalyzes the overall conversion of pyruvate to acetyl-CoA and CO(2). It contains multiple copies of three enzymatic components: pyruvate dehydrogenase (E1), dihydrolipoamide acetyltransferase (E2) and lipoamide dehydrogenase (E3). In Porphyra purpurea (Red seaweed), this protein is Pyruvate dehydrogenase E1 component subunit beta (pdhB).